The sequence spans 160 residues: ATP synthase subunit b (160 aa).

A helical membrane pass occupies residues 13–33 (VNLAIVIGVLVWFLRGFLGGI).

The protein belongs to the ATPase B chain family. In terms of assembly, F-type ATPases have 2 components, F(1) - the catalytic core - and F(0) - the membrane proton channel. F(1) has five subunits: alpha(3), beta(3), gamma(1), delta(1), epsilon(1). F(0) has four main subunits: a(1), b(1), b'(1) and c(10-14). The alpha and beta chains form an alternating ring which encloses part of the gamma chain. F(1) is attached to F(0) by a central stalk formed by the gamma and epsilon chains, while a peripheral stalk is formed by the delta, b and b' chains.

The protein localises to the cellular thylakoid membrane. Its function is as follows. F(1)F(0) ATP synthase produces ATP from ADP in the presence of a proton or sodium gradient. F-type ATPases consist of two structural domains, F(1) containing the extramembraneous catalytic core and F(0) containing the membrane proton channel, linked together by a central stalk and a peripheral stalk. During catalysis, ATP synthesis in the catalytic domain of F(1) is coupled via a rotary mechanism of the central stalk subunits to proton translocation. Functionally, component of the F(0) channel, it forms part of the peripheral stalk, linking F(1) to F(0). The protein is ATP synthase subunit b of Parasynechococcus marenigrum (strain WH8102).